The chain runs to 60 residues: UPF0434 protein PC1_1771 (60 aa).

This sequence belongs to the UPF0434 family.

The sequence is that of UPF0434 protein PC1_1771 from Pectobacterium carotovorum subsp. carotovorum (strain PC1).